The chain runs to 380 residues: Cytochrome b (380 aa).

The next 4 membrane-spanning stretches (helical) occupy residues 34-54 (FGSLLGICLITQILTGLLLAA), 78-99 (WLIRNLHANGASFFFICIYLHI), 114-134 (WNTGVTLLLTLMATAFVGYVL), and 179-199 (FFALHFLLPFMIAGLTLIHLT). The heme b site is built by His-84 and His-98. Heme b-binding residues include His-183 and His-197. Residue His-202 coordinates a ubiquinone. 4 consecutive transmembrane segments (helical) span residues 227–247 (LKDILGFAIMLLLLTTLALFS), 289–309 (LGGVLALAASVLILFLTPFLH), 321–341 (LSQLLFWLLVANLLILTWVGS), and 348–368 (FIIIGQMASITYFIIILVLFP).

The protein belongs to the cytochrome b family. The cytochrome bc1 complex contains 11 subunits: 3 respiratory subunits (MT-CYB, CYC1 and UQCRFS1), 2 core proteins (UQCRC1 and UQCRC2) and 6 low-molecular weight proteins (UQCRH/QCR6, UQCRB/QCR7, UQCRQ/QCR8, UQCR10/QCR9, UQCR11/QCR10 and a cleavage product of UQCRFS1). This cytochrome bc1 complex then forms a dimer. It depends on heme b as a cofactor.

Its subcellular location is the mitochondrion inner membrane. In terms of biological role, component of the ubiquinol-cytochrome c reductase complex (complex III or cytochrome b-c1 complex) that is part of the mitochondrial respiratory chain. The b-c1 complex mediates electron transfer from ubiquinol to cytochrome c. Contributes to the generation of a proton gradient across the mitochondrial membrane that is then used for ATP synthesis. The polypeptide is Cytochrome b (MT-CYB) (Pharomachrus antisianus (Crested quetzal)).